A 325-amino-acid chain; its full sequence is DNA-directed RNA polymerase subunit alpha (325 aa).

Residues 1–231 (MQTSLLKPKI…DQLSVFAALE (231 aa)) are alpha N-terminal domain (alpha-NTD). Residues 246–325 (IDPILLRPVD…ENWPPAGLDK (80 aa)) form an alpha C-terminal domain (alpha-CTD) region.

It belongs to the RNA polymerase alpha chain family. As to quaternary structure, homodimer. The RNAP catalytic core consists of 2 alpha, 1 beta, 1 beta' and 1 omega subunit. When a sigma factor is associated with the core the holoenzyme is formed, which can initiate transcription.

It carries out the reaction RNA(n) + a ribonucleoside 5'-triphosphate = RNA(n+1) + diphosphate. In terms of biological role, DNA-dependent RNA polymerase catalyzes the transcription of DNA into RNA using the four ribonucleoside triphosphates as substrates. In Paraburkholderia phytofirmans (strain DSM 17436 / LMG 22146 / PsJN) (Burkholderia phytofirmans), this protein is DNA-directed RNA polymerase subunit alpha.